The chain runs to 130 residues: Small ribosomal subunit protein uS9 (130 aa).

It belongs to the universal ribosomal protein uS9 family.

This chain is Small ribosomal subunit protein uS9, found in Clostridium beijerinckii (strain ATCC 51743 / NCIMB 8052) (Clostridium acetobutylicum).